We begin with the raw amino-acid sequence, 299 residues long: Oxygen-dependent coproporphyrinogen-III oxidase (299 aa).

A substrate-binding site is contributed by S92. H96 and H106 together coordinate a divalent metal cation. Catalysis depends on H106, which acts as the Proton donor. 108-110 (NVR) provides a ligand contact to substrate. 2 residues coordinate a divalent metal cation: H145 and H175. The segment at 240 to 275 (YVEFNLVWDRGTLFGLQTGGRTESILMSMPPLVRWE) is important for dimerization. Substrate is bound at residue 258–260 (GGR).

It belongs to the aerobic coproporphyrinogen-III oxidase family. In terms of assembly, homodimer. The cofactor is a divalent metal cation.

It localises to the cytoplasm. The enzyme catalyses coproporphyrinogen III + O2 + 2 H(+) = protoporphyrinogen IX + 2 CO2 + 2 H2O. It participates in porphyrin-containing compound metabolism; protoporphyrin-IX biosynthesis; protoporphyrinogen-IX from coproporphyrinogen-III (O2 route): step 1/1. Its function is as follows. Involved in the heme biosynthesis. Catalyzes the aerobic oxidative decarboxylation of propionate groups of rings A and B of coproporphyrinogen-III to yield the vinyl groups in protoporphyrinogen-IX. The sequence is that of Oxygen-dependent coproporphyrinogen-III oxidase from Salmonella choleraesuis (strain SC-B67).